A 166-amino-acid chain; its full sequence is Regulatory protein RecX (166 aa).

This sequence belongs to the RecX family.

Its subcellular location is the cytoplasm. Modulates RecA activity. This Escherichia coli (strain K12 / MC4100 / BW2952) protein is Regulatory protein RecX.